A 474-amino-acid polypeptide reads, in one-letter code: Trehalose-6-phosphate synthase (474 aa).

Arginine 10 serves as a coordination point for D-glucose 6-phosphate. 22-23 (GG) lines the UDP-alpha-D-glucose pocket. D-glucose 6-phosphate contacts are provided by tyrosine 77 and aspartate 131. UDP-alpha-D-glucose is bound by residues arginine 263 and lysine 268. Arginine 301 lines the D-glucose 6-phosphate pocket. Residues phenylalanine 340 and 366-370 (LVAKE) contribute to the UDP-alpha-D-glucose site.

Belongs to the glycosyltransferase 20 family. As to quaternary structure, homotetramer.

It carries out the reaction D-glucose 6-phosphate + UDP-alpha-D-glucose = alpha,alpha-trehalose 6-phosphate + UDP + H(+). It participates in glycan biosynthesis; trehalose biosynthesis. Probably involved in the osmoprotection via the biosynthesis of trehalose. Catalyzes the transfer of glucose from UDP-alpha-D-glucose (UDP-Glc) to D-glucose 6-phosphate (Glc-6-P) to form trehalose-6-phosphate. Acts with retention of the anomeric configuration of the UDP-sugar donor. The protein is Trehalose-6-phosphate synthase of Klebsiella pneumoniae subsp. pneumoniae (strain ATCC 700721 / MGH 78578).